The sequence spans 268 residues: Adenosylcobinamide-GDP ribazoletransferase (268 aa).

Helical transmembrane passes span 1–21 (MAGN…TLPV), 36–56 (YLFI…GTLF), 59–79 (ILPA…LTGI), 112–132 (AGGL…AMTF), 138–158 (WLFV…ITII), 182–202 (LAAV…AAII), 212–232 (IMAG…ILII), and 244–264 (VIGA…GAVL).

Belongs to the CobS family. Requires Mg(2+) as cofactor.

It localises to the cell membrane. It carries out the reaction alpha-ribazole + adenosylcob(III)inamide-GDP = adenosylcob(III)alamin + GMP + H(+). It catalyses the reaction alpha-ribazole 5'-phosphate + adenosylcob(III)inamide-GDP = adenosylcob(III)alamin 5'-phosphate + GMP + H(+). It participates in cofactor biosynthesis; adenosylcobalamin biosynthesis; adenosylcobalamin from cob(II)yrinate a,c-diamide: step 7/7. Joins adenosylcobinamide-GDP and alpha-ribazole to generate adenosylcobalamin (Ado-cobalamin). Also synthesizes adenosylcobalamin 5'-phosphate from adenosylcobinamide-GDP and alpha-ribazole 5'-phosphate. The protein is Adenosylcobinamide-GDP ribazoletransferase of Methanocella arvoryzae (strain DSM 22066 / NBRC 105507 / MRE50).